The primary structure comprises 286 residues: 3-methyl-2-oxobutanoate hydroxymethyltransferase (286 aa).

Positions 67 and 106 each coordinate Mg(2+). 3-methyl-2-oxobutanoate contacts are provided by residues 67–68 (DS), aspartate 106, and lysine 136. Mg(2+) is bound at residue glutamate 138. Catalysis depends on glutamate 204, which acts as the Proton acceptor.

It belongs to the PanB family. In terms of assembly, homodecamer; pentamer of dimers. Mg(2+) serves as cofactor.

The protein localises to the cytoplasm. It catalyses the reaction 3-methyl-2-oxobutanoate + (6R)-5,10-methylene-5,6,7,8-tetrahydrofolate + H2O = 2-dehydropantoate + (6S)-5,6,7,8-tetrahydrofolate. Its pathway is cofactor biosynthesis; (R)-pantothenate biosynthesis; (R)-pantoate from 3-methyl-2-oxobutanoate: step 1/2. Its function is as follows. Catalyzes the reversible reaction in which hydroxymethyl group from 5,10-methylenetetrahydrofolate is transferred onto alpha-ketoisovalerate to form ketopantoate. The polypeptide is 3-methyl-2-oxobutanoate hydroxymethyltransferase (Mycobacterium leprae (strain TN)).